The following is a 107-amino-acid chain: U1-lycotoxin-Ls1n (107 aa).

The N-terminal stretch at 1–20 is a signal peptide; sequence MMKVLVVVALLVTLISYSSS. A propeptide spanning residues 21-41 is cleaved from the precursor; it reads EGIDDLEADELLSLMANEQTR. 4 disulfides stabilise this stretch: cysteine 44-cysteine 59, cysteine 51-cysteine 68, cysteine 58-cysteine 86, and cysteine 70-cysteine 84.

The protein belongs to the neurotoxin 19 (CSTX) family. 04 (U1-Lctx) subfamily. Expressed by the venom gland.

It is found in the secreted. The chain is U1-lycotoxin-Ls1n from Lycosa singoriensis (Wolf spider).